Reading from the N-terminus, the 512-residue chain is Retinaldehyde dehydrogenase 3 (512 aa).

The disordered stretch occupies residues 1-22; it reads MATTNGAVENGQPDGKPPALPR. The residue at position 2 (alanine 2) is an N-acetylalanine. NAD(+)-binding positions include lysine 204, glutamate 207, and 257–262; that span reads GSTEVG. Glutamate 280 functions as the Proton acceptor in the catalytic mechanism. Residue cysteine 314 is the Nucleophile of the active site. 2 residues coordinate NAD(+): glutamine 361 and glutamate 411.

It belongs to the aldehyde dehydrogenase family. Homotetramer. In terms of tissue distribution, detected in embryonic head (at protein level). Ventral retina.

Its subcellular location is the cytoplasm. The catalysed reaction is retinal + NAD(+) + H2O = retinoate + NADH + 2 H(+). The enzyme catalyses all-trans-retinal + NAD(+) + H2O = all-trans-retinoate + NADH + 2 H(+). It carries out the reaction all-trans-13,14-dihydroretinal + NAD(+) + H2O = all-trans-13,14-dihydroretinoate + NADH + 2 H(+). Its pathway is cofactor metabolism; retinol metabolism. Functionally, catalyzes the NAD-dependent oxidation of aldehyde substrates, such as all-trans-retinal and all-trans-13,14-dihydroretinal, to their corresponding carboxylic acids, all-trans-retinoate and all-trans-13,14-dihydroretinoate, respectively. High specificity for all-trans-retinal as substrate, can also accept acetaldehyde as substrate in vitro but with lower affinity. Required for the biosynthesis of normal levels of retinoate in the embryonic ocular and nasal regions; a critical lipid in the embryonic development of the eye and the nasal region. This chain is Retinaldehyde dehydrogenase 3 (Aldh1a3), found in Mus musculus (Mouse).